Here is a 104-residue protein sequence, read N- to C-terminus: Large ribosomal subunit protein uL24 (104 aa).

Belongs to the universal ribosomal protein uL24 family. In terms of assembly, part of the 50S ribosomal subunit.

In terms of biological role, one of two assembly initiator proteins, it binds directly to the 5'-end of the 23S rRNA, where it nucleates assembly of the 50S subunit. One of the proteins that surrounds the polypeptide exit tunnel on the outside of the subunit. The sequence is that of Large ribosomal subunit protein uL24 from Pseudomonas savastanoi pv. phaseolicola (strain 1448A / Race 6) (Pseudomonas syringae pv. phaseolicola (strain 1448A / Race 6)).